A 111-amino-acid polypeptide reads, in one-letter code: Nucleoid-associated protein NMC1380 (111 aa).

Belongs to the YbaB/EbfC family. Homodimer.

Its subcellular location is the cytoplasm. It is found in the nucleoid. Its function is as follows. Binds to DNA and alters its conformation. May be involved in regulation of gene expression, nucleoid organization and DNA protection. This Neisseria meningitidis serogroup C / serotype 2a (strain ATCC 700532 / DSM 15464 / FAM18) protein is Nucleoid-associated protein NMC1380.